Reading from the N-terminus, the 558-residue chain is Glutamine--tRNA ligase (558 aa).

Positions 36 to 46 (PEPNGYLHIGH) match the 'HIGH' region motif. Residues 37 to 39 (EPN) and 43 to 49 (HIGHAKS) each bind ATP. Residues Asp-69 and Tyr-214 each coordinate L-glutamine. ATP-binding positions include Thr-233, 263–264 (RL), and 271–273 (LSK). The short motif at 270–274 (LLSKR) is the 'KMSKS' region element.

The protein belongs to the class-I aminoacyl-tRNA synthetase family. Monomer.

The protein resides in the cytoplasm. It carries out the reaction tRNA(Gln) + L-glutamine + ATP = L-glutaminyl-tRNA(Gln) + AMP + diphosphate. The chain is Glutamine--tRNA ligase from Bradyrhizobium diazoefficiens (strain JCM 10833 / BCRC 13528 / IAM 13628 / NBRC 14792 / USDA 110).